Reading from the N-terminus, the 681-residue chain is Envelope glycoprotein (681 aa).

A signal peptide spans 1–18 (MKTIYFLISLILIQSIKT). Topologically, residues 19 to 648 (LPVLEIASNS…GLGGKWWTSD (630 aa)) are extracellular. A receptor-binding region spans residues 38 to 188 (SGTLQKTEDV…FSRQGQGYRH (151 aa)). 7 N-linked (GlcNAc...) asparagine; by host glycosylation sites follow: Asn-94, Asn-171, Asn-190, Asn-202, Asn-207, Asn-219, and Asn-223. A disordered region spans residues 223-428 (NQTCPPSLKP…PDSSPTTRPP (206 aa)). Polar residues-rich tracts occupy residues 236-260 (PTVTPSIHSTNTQINTAKSGTMNPS) and 278-315 (PHTTLNVVTEQKQSSTILSTPSLHPSTSQHEQNSTNPS). Positions 277–455 (GPHTTLNVVT…PFLDGLINTE (179 aa)) are mucin-like region. Residues Asn-310, Asn-323, Asn-336, Asn-350, Asn-360, Asn-364, Asn-381, Asn-397, Asn-475, and Asn-487 are each glycosylated (N-linked (GlcNAc...) asparagine; by host). Positions 327–347 (PTTQPATLLNNTNTTPTYNTL) are enriched in low complexity. Composition is skewed to polar residues over residues 348–365 (KYNLSTPSPPTRNITNND) and 373–394 (SEQTNAQLNTTLDPTENPTTGQ). The segment covering 395 to 428 (DTNSTTNIIMTTSDITSKHPTNSSPDSSPTTRPP) has biased composition (low complexity). The tract at residues 529-549 (GLSWIPFFGPGIEGLYTAGLI) is fusion peptide. N-linked (GlcNAc...) asparagine; by host glycosylation is found at Asn-564 and Asn-619. Residues 649 to 669 (WGVLTNLGILLLLSIAVLIAL) form a helical membrane-spanning segment. The Cytoplasmic segment spans residues 670–681 (SCICRIFTKYIG). 2 S-palmitoyl cysteine; by host lipidation sites follow: Cys-671 and Cys-673.

This sequence belongs to the filoviruses glycoprotein family. In terms of assembly, homotrimer; each monomer consists of a GP1 and a GP2 subunit linked by disulfide bonds. The resulting peplomers (GP1,2) protrude from the virus surface as spikes. GP1,2 interacts with human CD209 and CLEC4M (collectively referred to as DC-SIGN(R)). Asialoglycoprotein receptor (ASGP-R) may be a liver-specific receptor for GP1,2. Members of the Tyro3 receptor tyrosine kinase family may be cell entry factors interacting with GP1,2. N-glycosylated. Post-translationally, O-glycosylated in the mucin-like region. In terms of processing, specific enzymatic cleavages in vivo yield mature proteins. The precursor is processed into GP1 and GP2 by host cell furin in the trans Golgi, and maybe by other host proteases, to yield the mature GP1 and GP2 proteins. The cleavage site corresponds to the furin optimal cleavage sequence [KR]-X-[KR]-R. GP1 is phosphorylated on serine residues between residues 260 and 273.

It is found in the virion membrane. Its subcellular location is the host cell membrane. Its function is as follows. GP1 is responsible for binding to the receptor(s) on target cells. Interacts with CD209/DC-SIGN and CLEC4M/DC-SIGNR which act as cofactors for virus entry into the host cell. Binding to CD209 and CLEC4M, which are respectively found on dendritic cells (DCs), and on endothelial cells of liver sinusoids and lymph node sinuses, facilitate infection of macrophages and endothelial cells. These interactions not only facilitate virus cell entry, but also allow capture of viral particles by DCs and subsequent transmission to susceptible cells without DCs infection (trans infection). Functionally, GP2 acts as a class I viral fusion protein. Under the current model, the protein has at least 3 conformational states: pre-fusion native state, pre-hairpin intermediate state, and post-fusion hairpin state. During viral and target cell membrane fusion, the coiled coil regions (heptad repeats) assume a trimer-of-hairpins structure, positioning the fusion peptide in close proximity to the C-terminal region of the ectodomain. The formation of this structure appears to drive apposition and subsequent fusion of viral and target cell membranes. Responsible for penetration of the virus into the cell cytoplasm by mediating the fusion of the membrane of the endocytosed virus particle with the endosomal membrane. Low pH in endosomes induces an irreversible conformational change in GP2, releasing the fusion hydrophobic peptide. The chain is Envelope glycoprotein (GP) from Chlorocebus aethiops (Green monkey).